The chain runs to 156 residues: ATP synthase subunit b (156 aa).

The helical transmembrane segment at 7–27 (LIGQTIAFIVFVWFCMKFVWP) threads the bilayer.

Belongs to the ATPase B chain family. In terms of assembly, F-type ATPases have 2 components, F(1) - the catalytic core - and F(0) - the membrane proton channel. F(1) has five subunits: alpha(3), beta(3), gamma(1), delta(1), epsilon(1). F(0) has three main subunits: a(1), b(2) and c(10-14). The alpha and beta chains form an alternating ring which encloses part of the gamma chain. F(1) is attached to F(0) by a central stalk formed by the gamma and epsilon chains, while a peripheral stalk is formed by the delta and b chains.

Its subcellular location is the cell inner membrane. Its function is as follows. F(1)F(0) ATP synthase produces ATP from ADP in the presence of a proton or sodium gradient. F-type ATPases consist of two structural domains, F(1) containing the extramembraneous catalytic core and F(0) containing the membrane proton channel, linked together by a central stalk and a peripheral stalk. During catalysis, ATP synthesis in the catalytic domain of F(1) is coupled via a rotary mechanism of the central stalk subunits to proton translocation. Functionally, component of the F(0) channel, it forms part of the peripheral stalk, linking F(1) to F(0). This chain is ATP synthase subunit b, found in Idiomarina loihiensis (strain ATCC BAA-735 / DSM 15497 / L2-TR).